The chain runs to 865 residues: Alanine--tRNA ligase (865 aa).

4 residues coordinate Zn(2+): His556, His560, Cys660, and His664.

The protein belongs to the class-II aminoacyl-tRNA synthetase family. Zn(2+) is required as a cofactor.

The protein resides in the cytoplasm. It carries out the reaction tRNA(Ala) + L-alanine + ATP = L-alanyl-tRNA(Ala) + AMP + diphosphate. Its function is as follows. Catalyzes the attachment of alanine to tRNA(Ala) in a two-step reaction: alanine is first activated by ATP to form Ala-AMP and then transferred to the acceptor end of tRNA(Ala). Also edits incorrectly charged Ser-tRNA(Ala) and Gly-tRNA(Ala) via its editing domain. This chain is Alanine--tRNA ligase, found in Ruthia magnifica subsp. Calyptogena magnifica.